A 190-amino-acid chain; its full sequence is Putative histone H1.6 (190 aa).

A disordered region spans residues 1-29 (MSDVAVAETPAVKTPTKAPKANATKVPKV). S2 carries the post-translational modification N-acetylserine. Residues 9–29 (TPAVKTPTKAPKANATKVPKV) show a composition bias toward low complexity. The 77-residue stretch at 34 to 110 (AHPPFINMVT…GATGRFRVAE (77 aa)) folds into the H15 domain. A disordered region spans residues 141–190 (KKTGDKVKKAKSPKKIAKPAAKKATKSPSKKVAPKKAAAKPAKKTAALKA). A compositionally biased stretch (basic residues) spans 148 to 183 (KKAKSPKKIAKPAAKKATKSPSKKVAPKKAAAKPAK).

Belongs to the histone H1/H5 family.

It is found in the nucleus. It localises to the chromosome. Histones H1 are necessary for the condensation of nucleosome chains into higher-order structures. This chain is Putative histone H1.6 (hil-6), found in Caenorhabditis elegans.